The primary structure comprises 279 residues: Thymidylate synthase 1 (279 aa).

141-142 provides a ligand contact to dUMP; it reads RR. Cys161 functions as the Nucleophile in the catalytic mechanism. DUMP contacts are provided by residues 181–184, Asn192, and 222–224; these read RSND and HVY. Asp184 contributes to the (6R)-5,10-methylene-5,6,7,8-tetrahydrofolate binding site. Ala278 contacts (6R)-5,10-methylene-5,6,7,8-tetrahydrofolate.

The protein belongs to the thymidylate synthase family. Bacterial-type ThyA subfamily. As to quaternary structure, homodimer.

It is found in the cytoplasm. The enzyme catalyses dUMP + (6R)-5,10-methylene-5,6,7,8-tetrahydrofolate = 7,8-dihydrofolate + dTMP. It functions in the pathway pyrimidine metabolism; dTTP biosynthesis. Its function is as follows. Catalyzes the reductive methylation of 2'-deoxyuridine-5'-monophosphate (dUMP) to 2'-deoxythymidine-5'-monophosphate (dTMP) while utilizing 5,10-methylenetetrahydrofolate (mTHF) as the methyl donor and reductant in the reaction, yielding dihydrofolate (DHF) as a by-product. This enzymatic reaction provides an intracellular de novo source of dTMP, an essential precursor for DNA biosynthesis. In Bacillus subtilis (strain 168), this protein is Thymidylate synthase 1.